Consider the following 353-residue polypeptide: Photosystem II D2 protein (353 aa).

T2 bears the N-acetylthreonine mark. T2 carries the post-translational modification Phosphothreonine. Residues 41 to 61 (CAYFSLGGWLTGTTFVTSWYT) traverse the membrane as a helical segment. Residue H118 coordinates chlorophyll a. Residues 125 to 141 (GFMLRQFELARSVQLRP) traverse the membrane as a helical segment. Positions 130 and 143 each coordinate pheophytin a. A helical membrane pass occupies residues 153-166 (VFVSVFLIYPLGQS). H198 provides a ligand contact to chlorophyll a. Residues 208–228 (AALLCAIHGATVENTLFEDGD) form a helical membrane-spanning segment. 2 residues coordinate a plastoquinone: H215 and F262. H215 serves as a coordination point for Fe cation. H269 is a Fe cation binding site. The chain crosses the membrane as a helical span at residues 279-295 (GLWMSAIGVVGLALNLR).

Belongs to the reaction center PufL/M/PsbA/D family. In terms of assembly, PSII is composed of 1 copy each of membrane proteins PsbA, PsbB, PsbC, PsbD, PsbE, PsbF, PsbH, PsbI, PsbJ, PsbK, PsbL, PsbM, PsbT, PsbX, PsbY, PsbZ, Psb30/Ycf12, at least 3 peripheral proteins of the oxygen-evolving complex and a large number of cofactors. It forms dimeric complexes. The D1/D2 heterodimer binds P680, chlorophylls that are the primary electron donor of PSII, and subsequent electron acceptors. It shares a non-heme iron and each subunit binds pheophytin, quinone, additional chlorophylls, carotenoids and lipids. There is also a Cl(-1) ion associated with D1 and D2, which is required for oxygen evolution. The PSII complex binds additional chlorophylls, carotenoids and specific lipids. serves as cofactor.

Its subcellular location is the plastid. The protein localises to the chloroplast thylakoid membrane. It carries out the reaction 2 a plastoquinone + 4 hnu + 2 H2O = 2 a plastoquinol + O2. Its function is as follows. Photosystem II (PSII) is a light-driven water:plastoquinone oxidoreductase that uses light energy to abstract electrons from H(2)O, generating O(2) and a proton gradient subsequently used for ATP formation. It consists of a core antenna complex that captures photons, and an electron transfer chain that converts photonic excitation into a charge separation. The D1/D2 (PsbA/PsbD) reaction center heterodimer binds P680, the primary electron donor of PSII as well as several subsequent electron acceptors. D2 is needed for assembly of a stable PSII complex. In Chara vulgaris (Common stonewort), this protein is Photosystem II D2 protein.